The sequence spans 149 residues: D-aminoacyl-tRNA deacylase (149 aa).

The Gly-cisPro motif, important for rejection of L-amino acids motif lies at 137 to 138; that stretch reads GP.

This sequence belongs to the DTD family. Homodimer.

Its subcellular location is the cytoplasm. The enzyme catalyses glycyl-tRNA(Ala) + H2O = tRNA(Ala) + glycine + H(+). The catalysed reaction is a D-aminoacyl-tRNA + H2O = a tRNA + a D-alpha-amino acid + H(+). Its function is as follows. An aminoacyl-tRNA editing enzyme that deacylates mischarged D-aminoacyl-tRNAs. Also deacylates mischarged glycyl-tRNA(Ala), protecting cells against glycine mischarging by AlaRS. Acts via tRNA-based rather than protein-based catalysis; rejects L-amino acids rather than detecting D-amino acids in the active site. By recycling D-aminoacyl-tRNA to D-amino acids and free tRNA molecules, this enzyme counteracts the toxicity associated with the formation of D-aminoacyl-tRNA entities in vivo and helps enforce protein L-homochirality. In Janthinobacterium sp. (strain Marseille) (Minibacterium massiliensis), this protein is D-aminoacyl-tRNA deacylase.